Here is a 340-residue protein sequence, read N- to C-terminus: Tetraacyldisaccharide 4'-kinase (340 aa).

ATP is bound at residue 51 to 58 (HMGGAGKT).

This sequence belongs to the LpxK family.

The enzyme catalyses a lipid A disaccharide + ATP = a lipid IVA + ADP + H(+). The protein operates within glycolipid biosynthesis; lipid IV(A) biosynthesis; lipid IV(A) from (3R)-3-hydroxytetradecanoyl-[acyl-carrier-protein] and UDP-N-acetyl-alpha-D-glucosamine: step 6/6. In terms of biological role, transfers the gamma-phosphate of ATP to the 4'-position of a tetraacyldisaccharide 1-phosphate intermediate (termed DS-1-P) to form tetraacyldisaccharide 1,4'-bis-phosphate (lipid IVA). This Rhodopseudomonas palustris (strain TIE-1) protein is Tetraacyldisaccharide 4'-kinase.